A 470-amino-acid polypeptide reads, in one-letter code: Probable G-protein coupled receptor 152 (470 aa).

The interval 1–25 (MDTTMEADLGATGHRPRTELDDEDS) is disordered. Over 1 to 33 (MDTTMEADLGATGHRPRTELDDEDSYPQGGWDT) the chain is Extracellular. Residues 34–54 (VFLVALLLLGLPANGLMAWLA) traverse the membrane as a helical segment. Residues 55–65 (GSQARHGAGTR) are Cytoplasmic-facing. The chain crosses the membrane as a helical span at residues 66–86 (LALLLLSLALSDFLFLAAAAF). Residues 87-105 (QILEIRHGGHWPLGTAACR) lie on the Extracellular side of the membrane. Residues Cys104 and Cys182 are joined by a disulfide bond. The chain crosses the membrane as a helical span at residues 106–126 (FYYFLWGVSYSSGLFLLAALS). Topologically, residues 127-148 (LDRCLLALCPHWYPGHRPVRLP) are cytoplasmic. Residues 149-169 (LWVCAGVWVLATLFSVPWLVF) form a helical membrane-spanning segment. Topologically, residues 170–194 (PEAAVWWYDLVICLDFWDSEELSLR) are extracellular. The helical transmembrane segment at 195-215 (MLEVLGGFLPFLLLLVCHVLT) threads the bilayer. At 216–257 (QATACRTCHRQQQPAACRGFARVARTILSAYVVLRLPYQLAQ) the chain is on the cytoplasmic side. A helical membrane pass occupies residues 258–278 (LLYLAFLWDVYSGYLLWEALV). Residues 279–281 (YSD) lie on the Extracellular side of the membrane. Residues 282-302 (YLILLNSCLSPFLCLMASADL) form a helical membrane-spanning segment. Over 303–470 (RTLLRSVLSS…PEAAPGAGPT (168 aa)) the chain is Cytoplasmic. Residues 322–470 (PGSFTPTEPQ…PEAAPGAGPT (149 aa)) form a disordered region. 2 stretches are compositionally biased toward polar residues: residues 325 to 335 (FTPTEPQTQLD) and 348 to 414 (AQSQ…NVQT). The segment covering 415 to 425 (PAPAASSVPSP) has biased composition (low complexity).

It belongs to the G-protein coupled receptor 1 family.

The protein resides in the cell membrane. In terms of biological role, orphan receptor. This is Probable G-protein coupled receptor 152 (GPR152) from Homo sapiens (Human).